The following is a 169-amino-acid chain: Styrene-oxide isomerase (169 aa).

4 consecutive transmembrane segments (helical) span residues Gly-13–Gly-33, Pro-61–Ala-81, Pro-85–Phe-105, and Phe-129–Ile-149.

Its subcellular location is the membrane. It carries out the reaction styrene oxide = 2-phenylacetaldehyde. It participates in aromatic compound metabolism. Epoxystyrene isomerase that catalyzes the second step in the aerobic styrene degradation pathway by converting epoxystyrene to phenylacetaldehyde. The sequence is that of Styrene-oxide isomerase (styC) from Pseudomonas fluorescens.